Consider the following 471-residue polypeptide: Glutamate--tRNA ligase (471 aa).

The short motif at 9–19 (PSPTGYLHVGG) is the 'HIGH' region element. Zn(2+)-binding residues include Cys-98, Cys-100, Cys-125, and His-127. The 'KMSKS' region motif lies at 237–241 (KLSKR). Residue Lys-240 coordinates ATP.

The protein belongs to the class-I aminoacyl-tRNA synthetase family. Glutamate--tRNA ligase type 1 subfamily. As to quaternary structure, monomer. Zn(2+) serves as cofactor.

The protein resides in the cytoplasm. It carries out the reaction tRNA(Glu) + L-glutamate + ATP = L-glutamyl-tRNA(Glu) + AMP + diphosphate. Its function is as follows. Catalyzes the attachment of glutamate to tRNA(Glu) in a two-step reaction: glutamate is first activated by ATP to form Glu-AMP and then transferred to the acceptor end of tRNA(Glu). The protein is Glutamate--tRNA ligase of Escherichia coli O6:K15:H31 (strain 536 / UPEC).